The following is a 1009-amino-acid chain: MICAL-like protein 2 (1009 aa).

In terms of domain architecture, Calponin-homology (CH) spans 1–107; that stretch reads MAAIKALQEW…YVSQYYNYFH (107 aa). The segment at 1–260 is forms an intramolecular interaction with the C-terminal coiled coil domain keeping the protein in a closed conformation; it reads MAAIKALQEW…KSSNLASRKP (260 aa). Phosphoserine is present on residues serine 110, serine 143, and serine 153. Disordered regions lie at residues 114-180, 247-268, 348-447, and 655-834; these read GMAG…PGTA, SVSP…ADTR, NSSP…TSKV, and SPSI…TSPV. A compositionally biased stretch (polar residues) spans 144 to 171; that stretch reads PAQTQRSPLSPARTNPVVQRNEGGSQRP. An LIM zinc-binding domain is found at 186-248; the sequence is SICGVCGKHV…THHSSEVTSV (63 aa). A Phosphoserine modification is found at serine 249. A necessary and sufficient for interaction with actinins region spans residues 261–393; it reads GGVTADTRPF…QGQTASKGVK (133 aa). Positions 261-805 are mediates targeting to the cell plasma membrane; sequence GGVTADTRPF…EDGTRSCKEE (545 aa). Residues 348 to 419 show a composition bias toward polar residues; that stretch reads NSSPIGWSSP…AWTSSASKTQ (72 aa). The segment covering 430–442 has biased composition (pro residues); it reads PSAPAPASAPAPA. A compositionally biased stretch (basic and acidic residues) spans 694 to 730; the sequence is EGWRARLKPVDKKTPAGRSLEQKEPVLAEPRIGDTSR. 2 stretches are compositionally biased toward low complexity: residues 731-746 and 755-769; these read KASS…TLTS and PAGS…SPSP. A phosphoserine mark is found at serine 766 and serine 768. A compositionally biased stretch (basic and acidic residues) spans 791–817; it reads EPKKQEDGTRSCKEEKSPTRWSRERSA. The interval 806-913 is forms an intramolecular interaction with the N-terminal Calponin-homology and LIM zinc-binding domains-containing region keeping the protein in a closed conformation; it reads KSPTRWSRER…LMYKSKDQRL (108 aa). Serine 832 is subject to Phosphoserine. The bMERB domain occupies 833 to 980; it reads PVRLHPDYIP…EQEEDQMLEN (148 aa). The stretch at 841–880 forms a coiled coil; sequence IPQEELQRQLQDIESQLDALELRGVELEKRLRAAEGDASE. A mediates interaction with RAB13 and is required for transition from the closed to the open conformation region spans residues 913–1009; sequence LEEQQLDLQG…WSSKSKSGQA (97 aa).

In terms of assembly, interacts with RAB13 (GTP-bound form); competes with RAB8A and is involved in tight junctions assembly. Interacts with RAB8A; competes with RAB13 and is involved in E-cadherin endocytic recycling. Interacts with RAB8B. Interacts (preferentially in opened conformation) with ACTN1 and ACTN4; stimulated by RAB13 activation. Interacts (via calponin-homology (CH) domain) with the filamins FLNA, FLNB and FLNC (via actin-binding domain). In terms of tissue distribution, detected in brain, lung, liver and kidney (at protein level).

The protein resides in the cell membrane. The protein localises to the cell junction. It localises to the tight junction. Its subcellular location is the recycling endosome. It is found in the cell projection. The protein resides in the neuron projection. The protein localises to the cytoplasm. It localises to the cytoskeleton. Functionally, effector of small Rab GTPases RAB8A and RAB13 which is involved in junctional complexes assembly through the regulation of cell adhesion molecules transport to the plasma membrane and actin cytoskeleton reorganization. Regulates the endocytic recycling of occludins, claudins and E-cadherin to the plasma membrane and may thereby regulate the establishment of tight junctions and adherens junctions. In parallel, may regulate actin cytoskeleton reorganization directly through interaction with F-actin or indirectly through actinins and filamins. Undergoes liquid-liquid phase separation to form tubular recycling endosomes. Plays 2 sequential roles in the biogenesis of tubular recycling endosomes: first organizes phase separation and then the closed form formed by interaction with RAB8A promotes endosomal tubulation. This Mus musculus (Mouse) protein is MICAL-like protein 2 (Micall2).